We begin with the raw amino-acid sequence, 259 residues long: Phosphonates import ATP-binding protein PhnC (259 aa).

Positions 4 to 245 constitute an ABC transporter domain; it reads ISIQSVTKRF…ALRTIYQREG (242 aa). Residue 37–44 coordinates ATP; it reads GPSGAGKS.

The protein belongs to the ABC transporter superfamily. Phosphonates importer (TC 3.A.1.9.1) family. In terms of assembly, the complex is composed of two ATP-binding proteins (PhnC), two transmembrane proteins (PhnE) and a solute-binding protein (PhnD).

It is found in the cell inner membrane. The catalysed reaction is phosphonate(out) + ATP + H2O = phosphonate(in) + ADP + phosphate + H(+). Part of the ABC transporter complex PhnCDE involved in phosphonates import. Responsible for energy coupling to the transport system. This chain is Phosphonates import ATP-binding protein PhnC, found in Thiobacillus denitrificans (strain ATCC 25259 / T1).